Here is a 486-residue protein sequence, read N- to C-terminus: Cardiolipin synthase A (486 aa).

Transmembrane regions (helical) follow at residues 3 to 23 (TFYT…IAGV) and 38 to 58 (MAWL…YLSL). PLD phosphodiesterase domains are found at residues 219–246 (MDLR…VDPR) and 399–426 (EGGL…DMRS). Active-site residues include H224, K226, D231, H404, K406, and D411.

This sequence belongs to the phospholipase D family. Cardiolipin synthase subfamily. ClsA sub-subfamily.

It localises to the cell inner membrane. The catalysed reaction is 2 a 1,2-diacyl-sn-glycero-3-phospho-(1'-sn-glycerol) = a cardiolipin + glycerol. Its function is as follows. Catalyzes the reversible phosphatidyl group transfer from one phosphatidylglycerol molecule to another to form cardiolipin (CL) (diphosphatidylglycerol) and glycerol. The protein is Cardiolipin synthase A of Erwinia tasmaniensis (strain DSM 17950 / CFBP 7177 / CIP 109463 / NCPPB 4357 / Et1/99).